Here is a 160-residue protein sequence, read N- to C-terminus: Ribosomal RNA large subunit methyltransferase H (160 aa).

Residues L76, G108, and 127–132 (FGFMTW) contribute to the S-adenosyl-L-methionine site.

The protein belongs to the RNA methyltransferase RlmH family. In terms of assembly, homodimer.

Its subcellular location is the cytoplasm. It carries out the reaction pseudouridine(1915) in 23S rRNA + S-adenosyl-L-methionine = N(3)-methylpseudouridine(1915) in 23S rRNA + S-adenosyl-L-homocysteine + H(+). Functionally, specifically methylates the pseudouridine at position 1915 (m3Psi1915) in 23S rRNA. This chain is Ribosomal RNA large subunit methyltransferase H, found in Bartonella henselae (strain ATCC 49882 / DSM 28221 / CCUG 30454 / Houston 1) (Rochalimaea henselae).